The sequence spans 181 residues: Regulator of G-protein signaling 5 (181 aa).

Residues 64–180 (SLDKLLQNNY…VRSEFYQEFI (117 aa)) form the RGS domain.

The protein resides in the cytoplasm. It is found in the membrane. In terms of biological role, inhibits signal transduction by increasing the GTPase activity of G protein alpha subunits thereby driving them into their inactive GDP-bound form. Binds to G(i)-alpha and G(o)-alpha, but not to G(s)-alpha. This Sus scrofa (Pig) protein is Regulator of G-protein signaling 5 (RGS5).